We begin with the raw amino-acid sequence, 355 residues long: UDP-N-acetylglucosamine--N-acetylmuramyl-(pentapeptide) pyrophosphoryl-undecaprenol N-acetylglucosamine transferase (355 aa).

UDP-N-acetyl-alpha-D-glucosamine is bound by residues 11 to 13, Arg164, Ser194, and Gln289; that span reads TAG.

The protein belongs to the glycosyltransferase 28 family. MurG subfamily.

It localises to the cell membrane. The enzyme catalyses di-trans,octa-cis-undecaprenyl diphospho-N-acetyl-alpha-D-muramoyl-L-alanyl-D-glutamyl-meso-2,6-diaminopimeloyl-D-alanyl-D-alanine + UDP-N-acetyl-alpha-D-glucosamine = di-trans,octa-cis-undecaprenyl diphospho-[N-acetyl-alpha-D-glucosaminyl-(1-&gt;4)]-N-acetyl-alpha-D-muramoyl-L-alanyl-D-glutamyl-meso-2,6-diaminopimeloyl-D-alanyl-D-alanine + UDP + H(+). It participates in cell wall biogenesis; peptidoglycan biosynthesis. In terms of biological role, cell wall formation. Catalyzes the transfer of a GlcNAc subunit on undecaprenyl-pyrophosphoryl-MurNAc-pentapeptide (lipid intermediate I) to form undecaprenyl-pyrophosphoryl-MurNAc-(pentapeptide)GlcNAc (lipid intermediate II). This chain is UDP-N-acetylglucosamine--N-acetylmuramyl-(pentapeptide) pyrophosphoryl-undecaprenol N-acetylglucosamine transferase, found in Lachnoclostridium phytofermentans (strain ATCC 700394 / DSM 18823 / ISDg) (Clostridium phytofermentans).